Here is a 720-residue protein sequence, read N- to C-terminus: 1,4-alpha-glucan branching enzyme GlgB (720 aa).

Asp400 (nucleophile) is an active-site residue. Catalysis depends on Glu453, which acts as the Proton donor.

The protein belongs to the glycosyl hydrolase 13 family. GlgB subfamily. In terms of assembly, monomer.

It catalyses the reaction Transfers a segment of a (1-&gt;4)-alpha-D-glucan chain to a primary hydroxy group in a similar glucan chain.. It functions in the pathway glycan biosynthesis; glycogen biosynthesis. Its function is as follows. Catalyzes the formation of the alpha-1,6-glucosidic linkages in glycogen by scission of a 1,4-alpha-linked oligosaccharide from growing alpha-1,4-glucan chains and the subsequent attachment of the oligosaccharide to the alpha-1,6 position. This chain is 1,4-alpha-glucan branching enzyme GlgB, found in Chlamydia pneumoniae (Chlamydophila pneumoniae).